Here is a 263-residue protein sequence, read N- to C-terminus: Hydroxyethylthiazole kinase 1 (263 aa).

Substrate is bound at residue methionine 42. ATP contacts are provided by lysine 118 and threonine 164. A substrate-binding site is contributed by glycine 191.

This sequence belongs to the Thz kinase family. The cofactor is Mg(2+).

The catalysed reaction is 5-(2-hydroxyethyl)-4-methylthiazole + ATP = 4-methyl-5-(2-phosphooxyethyl)-thiazole + ADP + H(+). Its pathway is cofactor biosynthesis; thiamine diphosphate biosynthesis; 4-methyl-5-(2-phosphoethyl)-thiazole from 5-(2-hydroxyethyl)-4-methylthiazole: step 1/1. Functionally, catalyzes the phosphorylation of the hydroxyl group of 4-methyl-5-beta-hydroxyethylthiazole (THZ). This chain is Hydroxyethylthiazole kinase 1, found in Clostridium botulinum (strain ATCC 19397 / Type A).